A 179-amino-acid chain; its full sequence is Adenine phosphoribosyltransferase (179 aa).

It belongs to the purine/pyrimidine phosphoribosyltransferase family. In terms of assembly, homodimer.

The protein resides in the cytoplasm. The enzyme catalyses AMP + diphosphate = 5-phospho-alpha-D-ribose 1-diphosphate + adenine. It functions in the pathway purine metabolism; AMP biosynthesis via salvage pathway; AMP from adenine: step 1/1. Its function is as follows. Catalyzes a salvage reaction resulting in the formation of AMP, that is energically less costly than de novo synthesis. In Gluconobacter oxydans (strain 621H) (Gluconobacter suboxydans), this protein is Adenine phosphoribosyltransferase.